A 198-amino-acid polypeptide reads, in one-letter code: Recombination protein RecR (198 aa).

Residues 58–73 form a C4-type zinc finger; the sequence is CSVCGNFTDTDPCAIC. Residues 81-175 enclose the Toprim domain; it reads DIICVVEQPK…KVTRIAAGIP (95 aa).

It belongs to the RecR family.

Its function is as follows. May play a role in DNA repair. It seems to be involved in an RecBC-independent recombinational process of DNA repair. It may act with RecF and RecO. The protein is Recombination protein RecR of Clostridium perfringens (strain ATCC 13124 / DSM 756 / JCM 1290 / NCIMB 6125 / NCTC 8237 / Type A).